Here is a 135-residue protein sequence, read N- to C-terminus: Protein PsiE homolog (135 aa).

4 consecutive transmembrane segments (helical) span residues 20–40 (VGLI…TIHL), 54–74 (YMLI…ALIV), 82–102 (HFPL…LIIV), and 107–127 (PIDT…LYLA).

This sequence belongs to the PsiE family.

It localises to the cell inner membrane. The sequence is that of Protein PsiE homolog from Yersinia pestis (strain Pestoides F).